The following is a 480-amino-acid chain: Aspartyl/glutamyl-tRNA(Asn/Gln) amidotransferase subunit B (480 aa).

This sequence belongs to the GatB/GatE family. GatB subfamily. In terms of assembly, heterotrimer of A, B and C subunits.

It carries out the reaction L-glutamyl-tRNA(Gln) + L-glutamine + ATP + H2O = L-glutaminyl-tRNA(Gln) + L-glutamate + ADP + phosphate + H(+). The catalysed reaction is L-aspartyl-tRNA(Asn) + L-glutamine + ATP + H2O = L-asparaginyl-tRNA(Asn) + L-glutamate + ADP + phosphate + 2 H(+). Functionally, allows the formation of correctly charged Asn-tRNA(Asn) or Gln-tRNA(Gln) through the transamidation of misacylated Asp-tRNA(Asn) or Glu-tRNA(Gln) in organisms which lack either or both of asparaginyl-tRNA or glutaminyl-tRNA synthetases. The reaction takes place in the presence of glutamine and ATP through an activated phospho-Asp-tRNA(Asn) or phospho-Glu-tRNA(Gln). This Caldicellulosiruptor saccharolyticus (strain ATCC 43494 / DSM 8903 / Tp8T 6331) protein is Aspartyl/glutamyl-tRNA(Asn/Gln) amidotransferase subunit B.